The following is a 347-amino-acid chain: RNA 3'-terminal phosphate cyclase (347 aa).

ATP contacts are provided by residues Gln-101 and 286 to 289 (HMAD). His-312 functions as the Tele-AMP-histidine intermediate in the catalytic mechanism.

The protein belongs to the RNA 3'-terminal cyclase family. Type 1 subfamily.

Its subcellular location is the cytoplasm. It catalyses the reaction a 3'-end 3'-phospho-ribonucleotide-RNA + ATP = a 3'-end 2',3'-cyclophospho-ribonucleotide-RNA + AMP + diphosphate. Catalyzes the conversion of 3'-phosphate to a 2',3'-cyclic phosphodiester at the end of RNA. The mechanism of action of the enzyme occurs in 3 steps: (A) adenylation of the enzyme by ATP; (B) transfer of adenylate to an RNA-N3'P to produce RNA-N3'PP5'A; (C) and attack of the adjacent 2'-hydroxyl on the 3'-phosphorus in the diester linkage to produce the cyclic end product. The biological role of this enzyme is unknown but it is likely to function in some aspects of cellular RNA processing. In Pyrobaculum neutrophilum (strain DSM 2338 / JCM 9278 / NBRC 100436 / V24Sta) (Thermoproteus neutrophilus), this protein is RNA 3'-terminal phosphate cyclase.